The following is a 155-amino-acid chain: Photosystem I reaction center subunit XI (155 aa).

The next 2 membrane-spanning stretches (helical) occupy residues 80 to 102 and 117 to 139; these read LISG…LVSF and GWSQ…AFFL.

The protein belongs to the PsaL family.

It is found in the cellular thylakoid membrane. This is Photosystem I reaction center subunit XI from Thermosynechococcus vestitus (strain NIES-2133 / IAM M-273 / BP-1).